The sequence spans 477 residues: D-alanyl-D-alanine carboxypeptidase DacB (477 aa).

Positions 1 to 20 (MRFSRFIIGLTSCIAFSVQA) are cleaved as a signal peptide. Ser62 (acyl-ester intermediate) is an active-site residue. Lys65 serves as the catalytic Proton acceptor. Residues 90–263 (GNVENGVLKG…YAGAILKDEL (174 aa)) are absent in class-A beta-lactamases. Ser306 is an active-site residue. Lys417 provides a ligand contact to substrate.

Belongs to the peptidase S13 family.

It localises to the periplasm. The catalysed reaction is Preferential cleavage: (Ac)2-L-Lys-D-Ala-|-D-Ala. Also transpeptidation of peptidyl-alanyl moieties that are N-acyl substituents of D-alanine.. It functions in the pathway cell wall biogenesis; peptidoglycan biosynthesis. Functionally, not involved in transpeptidation but exclusively catalyzes a DD-carboxypeptidase and DD-endopeptidase reaction. This chain is D-alanyl-D-alanine carboxypeptidase DacB (dacB), found in Escherichia coli (strain K12).